Reading from the N-terminus, the 1028-residue chain is Carbamoyl phosphate synthase large chain (1028 aa).

Positions 1–409 are carboxyphosphate synthetic domain; that stretch reads MPPRRDLKKI…ALMKALRGLE (409 aa). 12 residues coordinate ATP: arginine 129, arginine 169, glycine 175, glycine 176, glutamate 208, valine 210, glutamate 215, glycine 241, valine 242, histidine 243, glutamine 285, and glutamate 299. Residues 133–328 enclose the ATP-grasp 1 domain; that stretch reads QEAMQRIGLE…IAKIAALLAV (196 aa). Residues glutamine 285, glutamate 299, and asparagine 301 each coordinate Mg(2+). 3 residues coordinate Mn(2+): glutamine 285, glutamate 299, and asparagine 301. Residues 410–549 form an oligomerization domain region; it reads RDVRALAGVR…YSTYELEDEV (140 aa). The tract at residues 550 to 933 is carbamoyl phosphate synthetic domain; that stretch reads WPSQKPKVVI…AYYKAELGAG (384 aa). One can recognise an ATP-grasp 2 domain in the interval 674-866; that stretch reads HALCQRLGIP…LAKLAALIAV (193 aa). ATP is bound by residues arginine 710, arginine 750, leucine 752, glutamate 757, glycine 782, valine 783, histidine 784, serine 785, glutamine 825, and glutamate 837. Mg(2+) is bound by residues glutamine 825, glutamate 837, and asparagine 839. Mn(2+) contacts are provided by glutamine 825, glutamate 837, and asparagine 839. An MGS-like domain is found at 934–1028; it reads QRLPLSGRVR…QDWHQKAPRG (95 aa). Residues 934-1028 are allosteric domain; it reads QRLPLSGRVR…QDWHQKAPRG (95 aa).

This sequence belongs to the CarB family. Composed of two chains; the small (or glutamine) chain promotes the hydrolysis of glutamine to ammonia, which is used by the large (or ammonia) chain to synthesize carbamoyl phosphate. Tetramer of heterodimers (alpha,beta)4. Mg(2+) serves as cofactor. It depends on Mn(2+) as a cofactor.

The catalysed reaction is hydrogencarbonate + L-glutamine + 2 ATP + H2O = carbamoyl phosphate + L-glutamate + 2 ADP + phosphate + 2 H(+). It catalyses the reaction hydrogencarbonate + NH4(+) + 2 ATP = carbamoyl phosphate + 2 ADP + phosphate + 2 H(+). Its pathway is amino-acid biosynthesis; L-arginine biosynthesis; carbamoyl phosphate from bicarbonate: step 1/1. It participates in pyrimidine metabolism; UMP biosynthesis via de novo pathway; (S)-dihydroorotate from bicarbonate: step 1/3. Its function is as follows. Large subunit of the glutamine-dependent carbamoyl phosphate synthetase (CPSase). CPSase catalyzes the formation of carbamoyl phosphate from the ammonia moiety of glutamine, carbonate, and phosphate donated by ATP, constituting the first step of 2 biosynthetic pathways, one leading to arginine and/or urea and the other to pyrimidine nucleotides. The large subunit (synthetase) binds the substrates ammonia (free or transferred from glutamine from the small subunit), hydrogencarbonate and ATP and carries out an ATP-coupled ligase reaction, activating hydrogencarbonate by forming carboxy phosphate which reacts with ammonia to form carbamoyl phosphate. The polypeptide is Carbamoyl phosphate synthase large chain (Thermus thermophilus (strain ATCC 27634 / DSM 579 / HB8)).